A 373-amino-acid polypeptide reads, in one-letter code: Dual-specificity RNA methyltransferase RlmN (373 aa).

Catalysis depends on E94, which acts as the Proton acceptor. The 240-residue stretch at 100 to 339 folds into the Radical SAM core domain; it reads EDDRATLCVS…VIVRKTRGDD (240 aa). C107 and C344 are oxidised to a cystine. The [4Fe-4S] cluster site is built by C114, C118, and C121. S-adenosyl-L-methionine is bound by residues 168–169, S200, 222–224, and N301; these read GE and SIH. C344 functions as the S-methylcysteine intermediate in the catalytic mechanism.

Belongs to the radical SAM superfamily. RlmN family. [4Fe-4S] cluster is required as a cofactor.

It localises to the cytoplasm. It carries out the reaction adenosine(2503) in 23S rRNA + 2 reduced [2Fe-2S]-[ferredoxin] + 2 S-adenosyl-L-methionine = 2-methyladenosine(2503) in 23S rRNA + 5'-deoxyadenosine + L-methionine + 2 oxidized [2Fe-2S]-[ferredoxin] + S-adenosyl-L-homocysteine. The catalysed reaction is adenosine(37) in tRNA + 2 reduced [2Fe-2S]-[ferredoxin] + 2 S-adenosyl-L-methionine = 2-methyladenosine(37) in tRNA + 5'-deoxyadenosine + L-methionine + 2 oxidized [2Fe-2S]-[ferredoxin] + S-adenosyl-L-homocysteine. Functionally, specifically methylates position 2 of adenine 2503 in 23S rRNA and position 2 of adenine 37 in tRNAs. m2A2503 modification seems to play a crucial role in the proofreading step occurring at the peptidyl transferase center and thus would serve to optimize ribosomal fidelity. The sequence is that of Dual-specificity RNA methyltransferase RlmN from Shewanella sp. (strain MR-4).